The chain runs to 415 residues: Phosphoglycerate kinase (415 aa).

Substrate-binding positions include 24 to 26 (DLN), R39, 62 to 65 (HLGR), R121, and R161. ATP contacts are provided by residues K211, G307, E338, and 367-370 (GGDS).

It belongs to the phosphoglycerate kinase family. Monomer.

The protein resides in the cytoplasm. It carries out the reaction (2R)-3-phosphoglycerate + ATP = (2R)-3-phospho-glyceroyl phosphate + ADP. It participates in carbohydrate degradation; glycolysis; pyruvate from D-glyceraldehyde 3-phosphate: step 2/5. This chain is Phosphoglycerate kinase, found in Micrococcus luteus (strain ATCC 4698 / DSM 20030 / JCM 1464 / CCM 169 / CCUG 5858 / IAM 1056 / NBRC 3333 / NCIMB 9278 / NCTC 2665 / VKM Ac-2230) (Micrococcus lysodeikticus).